Here is a 317-residue protein sequence, read N- to C-terminus: Aspartate carbamoyltransferase catalytic subunit (317 aa).

Arginine 65 and threonine 66 together coordinate carbamoyl phosphate. Lysine 93 contributes to the L-aspartate binding site. Residues arginine 115, histidine 145, and glutamine 148 each coordinate carbamoyl phosphate. L-aspartate contacts are provided by arginine 178 and arginine 233. Positions 274 and 275 each coordinate carbamoyl phosphate.

It belongs to the aspartate/ornithine carbamoyltransferase superfamily. ATCase family. Heterododecamer (2C3:3R2) of six catalytic PyrB chains organized as two trimers (C3), and six regulatory PyrI chains organized as three dimers (R2).

The catalysed reaction is carbamoyl phosphate + L-aspartate = N-carbamoyl-L-aspartate + phosphate + H(+). Its pathway is pyrimidine metabolism; UMP biosynthesis via de novo pathway; (S)-dihydroorotate from bicarbonate: step 2/3. In terms of biological role, catalyzes the condensation of carbamoyl phosphate and aspartate to form carbamoyl aspartate and inorganic phosphate, the committed step in the de novo pyrimidine nucleotide biosynthesis pathway. The protein is Aspartate carbamoyltransferase catalytic subunit of Bordetella parapertussis (strain 12822 / ATCC BAA-587 / NCTC 13253).